Reading from the N-terminus, the 310-residue chain is Thioredoxin reductase (310 aa).

An FAD-binding site is contributed by Asn-34–Gln-41. An intrachain disulfide couples Cys-135 to Cys-138. Asp-281 to Ala-290 contacts FAD.

Belongs to the class-II pyridine nucleotide-disulfide oxidoreductase family. As to quaternary structure, homodimer. FAD is required as a cofactor.

The protein resides in the cytoplasm. It catalyses the reaction [thioredoxin]-dithiol + NADP(+) = [thioredoxin]-disulfide + NADPH + H(+). The polypeptide is Thioredoxin reductase (trxB) (Rickettsia felis (strain ATCC VR-1525 / URRWXCal2) (Rickettsia azadi)).